The primary structure comprises 689 residues: Shutoff protein (689 aa).

The interval 1 to 24 (MSEEPVSGTTVEIEEDTHTPPNSP) is disordered. Residues 226–289 (VMNNLLVKRA…SVLVTVVLEC (64 aa)) form a binding to host EIF4G region. One can recognise an RRM domain in the interval 292-410 (RLFTSKDMVK…PLYTETSQRL (119 aa)). Phosphotyrosine; by host occurs at positions 309 and 627. The tract at residues 625–689 (GQYLDPHTGE…GEPDVRGTTS (65 aa)) is disordered. Residues 645–655 (SGHEFQGDGRH) are compositionally biased toward basic and acidic residues. Residues 656-675 (REPKRGRHFRQRGGPRKPPR) show a composition bias toward basic residues. The segment covering 678–689 (AGGEPDVRGTTS) has biased composition (basic and acidic residues).

Belongs to the adenoviridae shutoff protein family. As to quaternary structure, monomer. Interacts with hexon protein; this interaction allows chaperoning and trimerization of hexon proteins. Interacts (via N-terminus) with host initiation factor EIF4G (via C-terminus). Interacts (via RRM domain) with viral mRNAs that contain the tripartite leader; this interaction allows ribosome shunting and expression of viral late mRNAs. In terms of processing, might be cleaved by the viral protease. Phosphorylated. Tyrosine phosphorylation enhances preferential binding to tripartite leader mRNAs and allows ribosome shunting. Post-translationally, methylated. Asymmetric dimethylation by host PRMT1 of the Arg/Gly-rich region may regulate shutoff protein binding to hexon and promote the capsid assembly in the nucleus.

The protein resides in the host cytoplasm. Functionally, protein that inhibits host translation while promoting late viral translation by ribosome shunting. Blocks host cap-dependent translation by binding to eIF4G, displacing MKNK1 from cap initiation complexes and preventing EIF4E phosphorylation. Binds to the tripartite leader sequence of viral late mRNAs and recruits host eIF4G, PABPC1/poly-A binding protein and 40S ribosomes subunits on viral mRNAs, allowing ribosome shunting and efficient translation of late viral mRNAs even though conventional translation via ribosome scanning from the cap has been shut off in the host cell. During assembly, acts as a chaperone protein that helps hexon proteins assembly into trimers. The sequence is that of Shutoff protein from Canis lupus familiaris (Dog).